A 163-amino-acid chain; its full sequence is Ribosome maturation factor RimP (163 aa).

Belongs to the RimP family.

The protein localises to the cytoplasm. Functionally, required for maturation of 30S ribosomal subunits. The sequence is that of Ribosome maturation factor RimP from Bordetella petrii (strain ATCC BAA-461 / DSM 12804 / CCUG 43448).